A 1024-amino-acid polypeptide reads, in one-letter code: Importin-8 (1024 aa).

The region spanning Ala-22–Arg-102 is the Importin N-terminal domain. The tract at residues Phe-896–Gly-969 is disordered. Composition is skewed to acidic residues over residues Ser-902 to Val-917 and Asp-934 to Leu-952.

The protein belongs to the importin beta family.

The protein resides in the cytoplasm. It localises to the nucleus. Functionally, involved in nuclear protein import, either by acting as autonomous nuclear transport receptor or as an adapter-like protein in association with the importin-beta subunit KPNB1. Acting autonomously, may serve as receptor for nuclear localization signals (NLS) and promote translocation of import substrates through the nuclear pore complex (NPC) by an energy requiring, Ran-dependent mechanism. At the nucleoplasmic side of the NPC, Ran binds to importin, the importin/substrate complex dissociates and importin is re-exported from the nucleus to the cytoplasm where GTP hydrolysis releases Ran. The directionality of nuclear import is thought to be conferred by an asymmetric distribution of the GTP- and GDP-bound forms of Ran between the cytoplasm and nucleus. In vitro mediates the nuclear import of the signal recognition particle protein SRP19. May also be involved in cytoplasm-to-nucleus shuttling of a broad spectrum of other cargos, including Argonaute-microRNAs complexes, the JUN protein, RELA/NF-kappa-B p65 subunit, the translation initiation factor EIF4E and a set of receptor-activated mothers against decapentaplegic homolog (SMAD) transcription factors that play a critical role downstream of the large family of transforming growth factor beta and bone morphogenetic protein (BMP) cytokines. In Danio rerio (Zebrafish), this protein is Importin-8 (ipo8).